Reading from the N-terminus, the 432-residue chain is Adenylosuccinate synthetase (432 aa).

Residues 13–19 (GDEGKGK) and 41–43 (GHT) contribute to the GTP site. Aspartate 14 acts as the Proton acceptor in catalysis. Mg(2+)-binding residues include aspartate 14 and glycine 41. IMP contacts are provided by residues 14–17 (DEGK), 39–42 (NAGH), threonine 131, arginine 145, glutamine 226, threonine 241, and arginine 305. The Proton donor role is filled by histidine 42. 301 to 307 (SVTGRAR) is a substrate binding site. GTP is bound by residues arginine 307, 333–335 (KLD), and 416–418 (STG).

Belongs to the adenylosuccinate synthetase family. Homodimer. Requires Mg(2+) as cofactor.

The protein localises to the cytoplasm. The enzyme catalyses IMP + L-aspartate + GTP = N(6)-(1,2-dicarboxyethyl)-AMP + GDP + phosphate + 2 H(+). It functions in the pathway purine metabolism; AMP biosynthesis via de novo pathway; AMP from IMP: step 1/2. Functionally, plays an important role in the de novo pathway of purine nucleotide biosynthesis. Catalyzes the first committed step in the biosynthesis of AMP from IMP. The polypeptide is Adenylosuccinate synthetase (Neisseria gonorrhoeae (strain ATCC 700825 / FA 1090)).